The chain runs to 161 residues: Cytochrome c-type biogenesis protein CcmE (161 aa).

Residues 1 to 8 (MNPRRKKR) are Cytoplasmic-facing. A helical; Signal-anchor for type II membrane protein transmembrane segment spans residues 9 to 29 (LTLAVALVFGLGATIGLMLYA). Over 30–161 (LSQNMDLFYT…SDEQKQGRVQ (132 aa)) the chain is Periplasmic. Residues His129 and Tyr133 each coordinate heme.

This sequence belongs to the CcmE/CycJ family.

It localises to the cell inner membrane. Its function is as follows. Heme chaperone required for the biogenesis of c-type cytochromes. Transiently binds heme delivered by CcmC and transfers the heme to apo-cytochromes in a process facilitated by CcmF and CcmH. The sequence is that of Cytochrome c-type biogenesis protein CcmE from Photobacterium profundum (strain SS9).